Here is a 164-residue protein sequence, read N- to C-terminus: Cytochrome c-type biogenesis protein CcmE (164 aa).

Residues 1–8 (MNPRRKSR) lie on the Cytoplasmic side of the membrane. The helical; Signal-anchor for type II membrane protein transmembrane segment at 9–29 (LYLAIVVLIGVALTATLMLYA) threads the bilayer. The Periplasmic portion of the chain corresponds to 30–164 (LRSNIDLFYT…ATPQNEGAKS (135 aa)). Residues H130 and Y134 each coordinate heme. Residues 131–148 (DEKYTPPEVADAMKENHK) are compositionally biased toward basic and acidic residues. The tract at residues 131–164 (DEKYTPPEVADAMKENHKGPASAYATPQNEGAKS) is disordered. Polar residues predominate over residues 155 to 164 (ATPQNEGAKS).

Belongs to the CcmE/CycJ family.

It localises to the cell inner membrane. Heme chaperone required for the biogenesis of c-type cytochromes. Transiently binds heme delivered by CcmC and transfers the heme to apo-cytochromes in a process facilitated by CcmF and CcmH. The protein is Cytochrome c-type biogenesis protein CcmE of Serratia proteamaculans (strain 568).